A 201-amino-acid chain; its full sequence is MRTLKSLVIVSAALLPFSATAFAADAIQEQPPVPAPVEVAPQYSWAGGYTGLYLGYGWNKAKTSTVGSIKPDDWKAGAFAGWNFQQDQIVYGVEGNAGYSWAKKSKDGLEVKQGFEGSLRARVGYDLNPVMPYLTAGIAGSQIKLNNGLDDESKFRVGWTAGAGLEAKLTDNILGRVEYRYTQYGNKLDTQDIRVGIGYKF.

Residues 1–23 (MRTLKSLVIVSAALLPFSATAFA) form the signal peptide.

Belongs to the Omp25/RopB family.

The protein resides in the cell outer membrane. The polypeptide is 25 kDa outer-membrane immunogenic protein (omp25) (Brucella ovis (strain ATCC 25840 / 63/290 / NCTC 10512)).